The chain runs to 677 residues: Secretogranin-1 (677 aa).

The signal sequence occupies residues 1-20 (MQPAMLLGLLGAAALAAVSS). C36 and C57 are joined by a disulfide. Disordered regions lie at residues 63–505 (KSGK…RQYE) and 531–558 (NSDF…VTLT). Basic and acidic residues predominate over residues 64–90 (SGKEVKGEEKGENQNSKFEVRLLRDPA). Phosphoserine occurs at positions 93, 99, and 100. A glycan (O-linked (Xyl...) (chondroitin sulfate) serine) is linked at S93. T115 is a glycosylation site (O-linked (GalNAc...) threonine). The segment covering 118–133 (GNEKWTEGGGHSREGV) has biased composition (basic and acidic residues). A phosphoserine mark is found at S129, S147, S190, and S220. Composition is skewed to basic and acidic residues over residues 148–192 (KEAK…DSGE) and 200–249 (KRSE…KPQE). A glycan (O-linked (Xyl...) (chondroitin sulfate) serine) is linked at S237. Residues 251 to 280 (TDQDQSQEESQEGEEGEEGEEGEEGEEDSA) are compositionally biased toward acidic residues. Phosphoserine occurs at positions 256, 260, 300, 301, 318, and 342. Residues 306–322 (PLSEERRPSPKESKEAD) are compositionally biased toward basic and acidic residues. Y348 carries the sulfotyrosine modification. Composition is skewed to basic and acidic residues over residues 363–409 (RGSE…ERSY) and 421–455 (GREP…DTAK). Residues S365, S375, and S378 each carry the phosphoserine modification. Y472 is modified (sulfotyrosine). The span at 491–504 (EESREEVRFPDRQY) shows a compositional bias: basic and acidic residues. A phosphoserine mark is found at S493, S532, and S543. Sulfotyrosine is present on residues Y566 and Y624. Positions 622 to 646 (DFYDSEEQMGPHQEANDEKARADQR) are disordered. Position 626 is a phosphoserine (S626). Over residues 635 to 646 (EANDEKARADQR) the composition is skewed to basic and acidic residues.

Belongs to the chromogranin/secretogranin protein family. Interacts with ITPR1 in the secretory granules.

It localises to the secreted. Secretogranin-1 is a neuroendocrine secretory granule protein, which may be the precursor for other biologically active peptides. This is Secretogranin-1 (Chgb) from Mus musculus (Mouse).